Consider the following 364-residue polypeptide: Anthranilate phosphoribosyltransferase (364 aa).

5-phospho-alpha-D-ribose 1-diphosphate is bound by residues G101, 104 to 105, T109, 111 to 114, 129 to 137, and G141; these read GD, NLST, and KHGNRAASS. G101 lines the anthranilate pocket. S113 is a binding site for Mg(2+). An anthranilate-binding site is contributed by N132. Residue R187 participates in anthranilate binding. Residues D245 and E246 each contribute to the Mg(2+) site.

The protein belongs to the anthranilate phosphoribosyltransferase family. Homodimer. It depends on Mg(2+) as a cofactor.

The enzyme catalyses N-(5-phospho-beta-D-ribosyl)anthranilate + diphosphate = 5-phospho-alpha-D-ribose 1-diphosphate + anthranilate. The protein operates within amino-acid biosynthesis; L-tryptophan biosynthesis; L-tryptophan from chorismate: step 2/5. Functionally, catalyzes the transfer of the phosphoribosyl group of 5-phosphorylribose-1-pyrophosphate (PRPP) to anthranilate to yield N-(5'-phosphoribosyl)-anthranilate (PRA). This is Anthranilate phosphoribosyltransferase from Mycolicibacterium gilvum (strain PYR-GCK) (Mycobacterium gilvum (strain PYR-GCK)).